The following is a 1403-amino-acid chain: DNA-directed RNA polymerase subunit beta' (1403 aa).

4 residues coordinate Zn(2+): C70, C72, C85, and C88. 3 residues coordinate Mg(2+): D461, D463, and D465. Positions 816, 890, 897, and 900 each coordinate Zn(2+).

Belongs to the RNA polymerase beta' chain family. The RNAP catalytic core consists of 2 alpha, 1 beta, 1 beta' and 1 omega subunit. When a sigma factor is associated with the core the holoenzyme is formed, which can initiate transcription. Mg(2+) is required as a cofactor. Requires Zn(2+) as cofactor.

The catalysed reaction is RNA(n) + a ribonucleoside 5'-triphosphate = RNA(n+1) + diphosphate. DNA-dependent RNA polymerase catalyzes the transcription of DNA into RNA using the four ribonucleoside triphosphates as substrates. The polypeptide is DNA-directed RNA polymerase subunit beta' (Dechloromonas aromatica (strain RCB)).